We begin with the raw amino-acid sequence, 470 residues long: Type II NADH:quinone oxidoreductase NdhA (470 aa).

Residues 21–25 (GSGFG) and valine 89 contribute to the FAD site. The active site involves glutamate 184. FAD contacts are provided by residues aspartate 323 and 334–335 (AQ). The chain crosses the membrane as a helical span at residues 389–409 (FAGYFAWLAWLVLHLVYLVGY).

Belongs to the NADH dehydrogenase family. It depends on FAD as a cofactor.

The protein localises to the cell inner membrane. The enzyme catalyses a quinone + NADH + H(+) = a quinol + NAD(+). The catalysed reaction is a menaquinone + NADH + H(+) = a menaquinol + NAD(+). With respect to regulation, inhibited by phenothiazine analogs. Its function is as follows. Alternative, nonproton pumping NADH:quinone oxidoreductase that delivers electrons to the respiratory chain by oxidation of NADH and reduction of quinones. This is Type II NADH:quinone oxidoreductase NdhA from Mycobacterium tuberculosis (strain ATCC 25618 / H37Rv).